Here is a 273-residue protein sequence, read N- to C-terminus: Histidine racemase (273 aa).

The active-site Proton acceptor is cysteine 72. Catalysis depends on cysteine 211, which acts as the Proton donor.

It belongs to the histidine racemase family. As to quaternary structure, homodimer.

It localises to the cytoplasm. The catalysed reaction is L-histidine = D-histidine. Its function is as follows. Isomerase that catalyzes the conversion of L-histidine to D-histidine. Functions the biosynthesis of the metallophore staphylopine, which is involved in the acquisition of nickel, cobalt, zinc, copper, and iron, and thus enables bacterial growth inside the host, where metal access is limited. Therefore, this enzyme probably contributes to staphylococcal virulence. The reaction is reversible in vitro, the enzyme can produce D-histidine from the L-stereoisomer and vice versa. Appears to be specific for histidine as it cannot use other amino acids as substrate, including L-alanine and L-methionine. This Staphylococcus aureus (strain Mu50 / ATCC 700699) protein is Histidine racemase.